A 370-amino-acid chain; its full sequence is Protein Brevis radix-like 3 (370 aa).

In terms of domain architecture, BRX 1 spans 140 to 221 (KEWVAQVEPG…NFEKVMELYN (82 aa)). Composition is skewed to polar residues over residues 231-248 (LQTP…QSVK) and 266-291 (PGSS…SSID). The tract at residues 231–316 (LQTPPVSEDG…VSNASDMESE (86 aa)) is disordered. The BRX 2 domain occupies 315–370 (SEWVEQDEPGIYITIRALPDGNRELRRVRFSRDKFGETHARLWWEQNRARIQQQYL).

Belongs to the BRX family. In terms of tissue distribution, expressed in roots.

It localises to the nucleus. The polypeptide is Protein Brevis radix-like 3 (BRXL3) (Arabidopsis thaliana (Mouse-ear cress)).